A 965-amino-acid polypeptide reads, in one-letter code: Argonaute protein wago-4 (965 aa).

The disordered stretch occupies residues 1-34 (MPALPPVYTPSGAPSSVHAPPAVPPVPVPTQPLR). A compositionally biased stretch (low complexity) spans 10–20 (PSGAPSSVHAP). The segment covering 21 to 30 (PAVPPVPVPT) has biased composition (pro residues). One can recognise a PAZ domain in the interval 318-428 (PILDKLKEIT…YPMELLKISS (111 aa)). In terms of domain architecture, Piwi spans 594-924 (TFVFIITDDS…YAKRGRNLWN (331 aa)).

The protein belongs to the argonaute family. WAGO subfamily. Interacts with znfx-1; the interaction promotes the transmission of epigenetic information across generations. May interact with mina-1. Expressed in the hermaphrodite germline and in oocytes. Expressed at a low level in the male germline. Not expressed in the soma of hermaphrodites or males.

The protein resides in the cytoplasm. It localises to the perinuclear region. It is found in the cytoplasmic granule. In terms of biological role, argonaute protein which is involved in the endogenous small interfering RNA (endo-siRNA) pathway and is required for RNA-mediated gene silencing (RNAi) in the germline. Interacts with secondary 22G-RNAs, which are RNA-dependent RNA polymerase-derived endo-siRNAs, typically 22 nucleotides in length with a 5'guanosine residue. Also interacts with the mRNA targets of 22G-RNAs. Associates with znfx-1 to mediate small RNA-directed transgenerational epigenetic inheritance of both germline- and soma-expressed genes. The polypeptide is Argonaute protein wago-4 (Caenorhabditis elegans).